Reading from the N-terminus, the 278-residue chain is Replication protein A 32 kDa subunit B (278 aa).

The segment at residues 70–143 (VVIVGRISRM…RSVNVFSVRP (74 aa)) is a DNA-binding region (OB).

Belongs to the replication factor A protein 2 family. Heterotrimer of RPA1, RPA2 and RPA3 (canonical replication protein A complex). Phosphorylated in a cell-cycle-dependent manner (from the S phase until mitosis). In response to DNA damage, recruited to DNA-repair nuclear foci, as a hypophosphorylated form.

The protein resides in the nucleus. Component of the replication protein A complex (RPA) required for DNA recombination, repair and replication. The activity of RPA is mediated by single-stranded DNA binding and protein interactions. Required fo cell division in meristems. Involved in the maintenance of transcriptional epigenetic gene silencing (TGS) at specific loci (including some transposons) by regulating histone H3 acetylation, 'Lys-4' and 'Lys-9' methylation. The protein is Replication protein A 32 kDa subunit B (RPA2B) of Arabidopsis thaliana (Mouse-ear cress).